A 261-amino-acid polypeptide reads, in one-letter code: MSDILDRIIAVKREEIAAALRSTPLEALKLEASARDLRDFVGALRAKHAAGNAAVIAEIKKASPSKGVLREHFVPADIARSYAAHGAACLSVLTDEQFFQGGVRYLEEARAACTLPVLRKDFIVDAYQIVEARAMGADAILLIAAALDTPLMQDLEAYAHSLGLAVLVEVHDRHEMEQALTLKTPLLGINNRNLRTFETSIQTTLDMLDMIPADRIVVTESGILSRTDVDTMRAANVNTFLVGEAFMRAEQPGEELARMFF.

Belongs to the TrpC family.

The enzyme catalyses 1-(2-carboxyphenylamino)-1-deoxy-D-ribulose 5-phosphate + H(+) = (1S,2R)-1-C-(indol-3-yl)glycerol 3-phosphate + CO2 + H2O. It functions in the pathway amino-acid biosynthesis; L-tryptophan biosynthesis; L-tryptophan from chorismate: step 4/5. In Burkholderia cenocepacia (strain HI2424), this protein is Indole-3-glycerol phosphate synthase.